We begin with the raw amino-acid sequence, 310 residues long: Aspartate carbamoyltransferase catalytic subunit (310 aa).

Carbamoyl phosphate contacts are provided by R57 and T58. K86 contributes to the L-aspartate binding site. R107, H135, and Q138 together coordinate carbamoyl phosphate. Positions 168 and 229 each coordinate L-aspartate. Residues L268 and P269 each contribute to the carbamoyl phosphate site.

The protein belongs to the aspartate/ornithine carbamoyltransferase superfamily. ATCase family. Heterooligomer of catalytic and regulatory chains.

The enzyme catalyses carbamoyl phosphate + L-aspartate = N-carbamoyl-L-aspartate + phosphate + H(+). Its pathway is pyrimidine metabolism; UMP biosynthesis via de novo pathway; (S)-dihydroorotate from bicarbonate: step 2/3. Its function is as follows. Catalyzes the condensation of carbamoyl phosphate and aspartate to form carbamoyl aspartate and inorganic phosphate, the committed step in the de novo pyrimidine nucleotide biosynthesis pathway. The protein is Aspartate carbamoyltransferase catalytic subunit of Thermococcus onnurineus (strain NA1).